A 478-amino-acid polypeptide reads, in one-letter code: Ribulose bisphosphate carboxylase large chain (478 aa).

A propeptide spanning residues 1–2 (MS) is cleaved from the precursor. Asparagine 123 and threonine 173 together coordinate substrate. Lysine 175 acts as the Proton acceptor in catalysis. Residue lysine 177 coordinates substrate. Mg(2+) contacts are provided by lysine 201, aspartate 203, and glutamate 204. At lysine 201 the chain carries N6-carboxylysine. Residue serine 208 is modified to Phosphoserine. Residue histidine 294 is the Proton acceptor of the active site. Substrate is bound by residues arginine 295 and histidine 327. Threonine 330 is subject to Phosphothreonine. Substrate is bound at residue serine 379.

Belongs to the RuBisCO large chain family. Type I subfamily. Heterohexadecamer of 8 large chains and 8 small chains; disulfide-linked. The disulfide link is formed within the large subunit homodimers. Requires Mg(2+) as cofactor. Post-translationally, the disulfide bond which can form in the large chain dimeric partners within the hexadecamer appears to be associated with oxidative stress and protein turnover.

The protein resides in the plastid. Its subcellular location is the chloroplast. The catalysed reaction is 2 (2R)-3-phosphoglycerate + 2 H(+) = D-ribulose 1,5-bisphosphate + CO2 + H2O. The enzyme catalyses D-ribulose 1,5-bisphosphate + O2 = 2-phosphoglycolate + (2R)-3-phosphoglycerate + 2 H(+). Its function is as follows. RuBisCO catalyzes two reactions: the carboxylation of D-ribulose 1,5-bisphosphate, the primary event in carbon dioxide fixation, as well as the oxidative fragmentation of the pentose substrate in the photorespiration process. Both reactions occur simultaneously and in competition at the same active site. This Lepidium virginicum (Virginia pepperweed) protein is Ribulose bisphosphate carboxylase large chain.